The primary structure comprises 507 residues: Extracellular elastase (507 aa).

A signal peptide spans 1-28 (MKNFSKFALTSIAALTVASPLVNTEVDA). The propeptide occupies 29–207 (KDKVSATQNI…VVDKLNMIKE (179 aa)). Ca(2+) is bound at residue Asp-347. A Zn(2+)-binding site is contributed by His-351. Glu-352 is a catalytic residue. Zn(2+)-binding residues include His-355 and Glu-375. 9 residues coordinate Ca(2+): Asp-386, Glu-388, Asp-389, Leu-391, Glu-394, Tyr-397, Thr-398, Val-401, and Asp-404. Residue His-435 is the Proton donor of the active site.

Belongs to the peptidase M4 family. Requires Ca(2+) as cofactor. Zn(2+) is required as a cofactor.

The protein localises to the secreted. Its function is as follows. Protease that has a low substrate specificity. Glucagon is preferentially cleaved between aromatic (Phe) and hydrophobic (Val) amino acids. Hydrolyzes casein and elastin. The sequence is that of Extracellular elastase (sepA) from Staphylococcus epidermidis.